A 338-amino-acid polypeptide reads, in one-letter code: Anthranilate phosphoribosyltransferase (338 aa).

5-phospho-alpha-D-ribose 1-diphosphate-binding positions include glycine 81, 84–85 (GD), serine 89, 91–94 (NVST), 109–117 (KHGNRALSS), and alanine 121. Anthranilate is bound at residue glycine 81. Residue serine 93 coordinates Mg(2+). Anthranilate is bound at residue asparagine 112. Residue arginine 167 participates in anthranilate binding. Positions 226 and 227 each coordinate Mg(2+).

This sequence belongs to the anthranilate phosphoribosyltransferase family. Homodimer. Mg(2+) is required as a cofactor.

It carries out the reaction N-(5-phospho-beta-D-ribosyl)anthranilate + diphosphate = 5-phospho-alpha-D-ribose 1-diphosphate + anthranilate. Its pathway is amino-acid biosynthesis; L-tryptophan biosynthesis; L-tryptophan from chorismate: step 2/5. In terms of biological role, catalyzes the transfer of the phosphoribosyl group of 5-phosphorylribose-1-pyrophosphate (PRPP) to anthranilate to yield N-(5'-phosphoribosyl)-anthranilate (PRA). The chain is Anthranilate phosphoribosyltransferase from Rhodopseudomonas palustris (strain HaA2).